A 221-amino-acid chain; its full sequence is Late embryogenesis abundant protein, group 3 (221 aa).

The disordered stretch occupies residues 1 to 221; the sequence is MASHQDKASY…KDSSTITRDH (221 aa). A compositionally biased stretch (basic and acidic residues) spans 33–42; sequence TAQHAKDRAA. The segment covering 43–52 has biased composition (low complexity); the sequence is DAAGHAAGKG. Basic and acidic residues-rich tracts occupy residues 53–63 and 72–147; these read QDAKEATKQKA and KKTD…KQKA. Polar residues predominate over residues 212–221; the sequence is KDSSTITRDH.

The protein belongs to the LEA type 4 family.

The sequence is that of Late embryogenesis abundant protein, group 3 (MGL3) from Zea mays (Maize).